The primary structure comprises 480 residues: UDP-glucose 6-dehydrogenase 2 (480 aa).

NAD(+) is bound by residues 8-13 (GAGYVG), Asp33, Arg38, 86-90 (VNTPT), 127-128 (ST), and Glu161. Substrate contacts are provided by residues 157–161 (EFLAE), 216–223 (KLAANAFL), and 256–269 (RIGPKFLNSSVGFG). Cys272 (nucleophile) is an active-site residue. 272–275 (CFQK) lines the NAD(+) pocket. A substrate-binding site is contributed by 334-335 (FK). Arg342 provides a ligand contact to NAD(+). Substrate is bound at residue Arg447.

It belongs to the UDP-glucose/GDP-mannose dehydrogenase family. As to expression, preferentially expressed in roots.

It catalyses the reaction UDP-alpha-D-glucose + 2 NAD(+) + H2O = UDP-alpha-D-glucuronate + 2 NADH + 3 H(+). The protein operates within nucleotide-sugar biosynthesis; UDP-alpha-D-glucuronate biosynthesis; UDP-alpha-D-glucuronate from UDP-alpha-D-glucose: step 1/1. With respect to regulation, inhibited by UDP-xylose. Functionally, involved in the biosynthesis of UDP-glucuronic acid (UDP-GlcA), providing nucleotide sugars for cell-wall polymers. Required for the formation of cell wall ingrowths on the outer cell walls of nematode-induced syncytia. The polypeptide is UDP-glucose 6-dehydrogenase 2 (UGD2) (Arabidopsis thaliana (Mouse-ear cress)).